The sequence spans 133 residues: CDGSH iron-sulfur domain protein (133 aa).

Topologically, residues 1-35 are lumenal; that stretch reads MEPISHLVKSSLPNYLSSLPVPDSIGGWFKLSFKD. A helical transmembrane segment spans residues 36–58; that stretch reads WLALIPPTVVVAGLGYTAYLAYC. The Cytoplasmic portion of the chain corresponds to 59 to 133; it reads PAARASCAAK…DNVGPIVIKK (75 aa). Cysteine 100, cysteine 102, cysteine 111, and histidine 115 together coordinate [2Fe-2S] cluster.

The protein belongs to the CISD protein family. CISD2 subfamily. [2Fe-2S] cluster serves as cofactor.

The protein resides in the endoplasmic reticulum membrane. This chain is CDGSH iron-sulfur domain protein, found in Drosophila melanogaster (Fruit fly).